Reading from the N-terminus, the 346-residue chain is N(4)-(beta-N-acetylglucosaminyl)-L-asparaginase (346 aa).

An N-terminal signal peptide occupies residues 1–23 (MERKSNLSLLLLLLVLGMPLVRG). N-linked (GlcNAc...) asparagine glycosylation occurs at Asn-38. 2 disulfide bridges follow: Cys-64–Cys-69 and Cys-163–Cys-179. Thr-206 serves as the catalytic Nucleophile. Residues 234 to 237 (RVGD) and 257 to 260 (TGDG) each bind substrate. Cysteines 286 and 306 form a disulfide. The N-linked (GlcNAc...) asparagine glycan is linked to Asn-310. An intrachain disulfide couples Cys-317 to Cys-345.

The protein belongs to the Ntn-hydrolase family. Heterotetramer of two alpha and two beta chains arranged as a dimer of alpha/beta heterodimers. Cleaved into an alpha and beta chain by autocatalysis; this activates the enzyme. The N-terminal residue of the beta subunit is responsible for the nucleophile hydrolase activity. Post-translationally, N-glycosylated.

It is found in the lysosome. The catalysed reaction is N(4)-(beta-N-acetyl-D-glucosaminyl)-L-asparagine + H2O = N-acetyl-beta-D-glucosaminylamine + L-aspartate + H(+). In terms of biological role, cleaves the GlcNAc-Asn bond which joins oligosaccharides to the peptide of asparagine-linked glycoproteins. This chain is N(4)-(beta-N-acetylglucosaminyl)-L-asparaginase (Aga), found in Mus musculus (Mouse).